The following is a 283-amino-acid chain: Transcription factor bHLH104 (283 aa).

The interval 96–134 (VEINSGSSGGAVKEEQEHLDDDCSRKRARTGSCSRGGGT) is disordered. Basic and acidic residues predominate over residues 107-120 (VKEEQEHLDDDCSR). The bHLH domain maps to 130–181 (RGGGTKACRERLRREKLNERFMDLSSVLEPGRTPKTDKPAILDDAIRILNQL).

Homodimer. Interacts with BTS and BHLH47/PYE.

The protein resides in the nucleus. The polypeptide is Transcription factor bHLH104 (BHLH104) (Arabidopsis thaliana (Mouse-ear cress)).